Reading from the N-terminus, the 324-residue chain is Adenine deaminase (324 aa).

3 residues coordinate Zn(2+): His11, His13, and His189. Glu192 functions as the Proton donor in the catalytic mechanism. Asp270 contacts Zn(2+). Asp271 serves as a coordination point for substrate.

Belongs to the metallo-dependent hydrolases superfamily. Adenosine and AMP deaminases family. Adenine deaminase type 2 subfamily. It depends on Zn(2+) as a cofactor.

It catalyses the reaction adenine + H2O + H(+) = hypoxanthine + NH4(+). Its function is as follows. Catalyzes the hydrolytic deamination of adenine to hypoxanthine. Plays an important role in the purine salvage pathway and in nitrogen catabolism. This chain is Adenine deaminase, found in Sinorhizobium fredii (strain NBRC 101917 / NGR234).